Reading from the N-terminus, the 1673-residue chain is Glutamine and serine-rich protein 1 (1673 aa).

8 disordered regions span residues 265-322, 411-543, 872-892, 923-961, 1050-1081, 1149-1182, 1216-1272, and 1390-1476; these read VIPS…SSQA, DQTR…KSYV, RHMS…LSIN, QDLP…PKEG, DENA…QYSS, VIRP…KAEE, LSAL…EQLA, and KSKV…PPPI. The segment covering 289–309 has biased composition (polar residues); it reads SSKTPKSQSVVSPELTQSYTK. Composition is skewed to low complexity over residues 310-322 and 411-458; these read SSQN…SSQA and DQTR…PSDS. The span at 459–539 shows a compositional bias: polar residues; that stretch reads YTSGQNQTLA…MQNSRTTADS (81 aa). Residues 947 to 956 are compositionally biased toward polar residues; it reads NIKNPPNVNQ. A compositionally biased stretch (basic and acidic residues) spans 1222 to 1233; that stretch reads NSEKRLKTEGDK. Polar residues-rich tracts occupy residues 1259-1272 and 1397-1411; these read KPSQ…EQLA and ARTT…SKVS. A compositionally biased stretch (basic and acidic residues) spans 1435–1451; that stretch reads TKAEPPPKKRKQWKEEF. Low complexity predominate over residues 1452-1462; the sequence is SSSQSDSSPDM.

Its subcellular location is the chromosome. Functionally, plays an essential role in the protection and maintenance of transcriptional and developmental programs. Protects many bivalent promoters and poised enhancers from hypermethylation, showing a marked preference for these regulatory elements over other types of promoters or enhancers. Mechanistically, cooperates with tet1 and binds to DNA in a common complex to inhibit the binding of dnmt3a/3b and therefore de novo methylation. In Xenopus laevis (African clawed frog), this protein is Glutamine and serine-rich protein 1 (qser1).